The following is a 110-amino-acid chain: uncharacterized protein (110 aa).

This is an uncharacterized protein from Sulfolobus islandicus rod-shaped virus 1 (SIRV-1).